The chain runs to 217 residues: ATP-dependent Clp protease proteolytic subunit 2 (217 aa).

The active-site Nucleophile is serine 113. Histidine 138 is a catalytic residue.

The protein belongs to the peptidase S14 family. Fourteen ClpP subunits assemble into 2 heptameric rings which stack back to back to give a disk-like structure with a central cavity, resembling the structure of eukaryotic proteasomes.

The protein localises to the cytoplasm. The enzyme catalyses Hydrolysis of proteins to small peptides in the presence of ATP and magnesium. alpha-casein is the usual test substrate. In the absence of ATP, only oligopeptides shorter than five residues are hydrolyzed (such as succinyl-Leu-Tyr-|-NHMec, and Leu-Tyr-Leu-|-Tyr-Trp, in which cleavage of the -Tyr-|-Leu- and -Tyr-|-Trp bonds also occurs).. Cleaves peptides in various proteins in a process that requires ATP hydrolysis. Has a chymotrypsin-like activity. Plays a major role in the degradation of misfolded proteins. This chain is ATP-dependent Clp protease proteolytic subunit 2, found in Frankia casuarinae (strain DSM 45818 / CECT 9043 / HFP020203 / CcI3).